Here is a 589-residue protein sequence, read N- to C-terminus: Protein NRT1/ PTR FAMILY 4.7 (589 aa).

Transmembrane regions (helical) follow at residues 59 to 79, 105 to 125, 127 to 147, 160 to 180, 201 to 221, 230 to 250, 344 to 364, 383 to 403, 429 to 449, 471 to 491, 520 to 540, and 560 to 580; these read GMLA…AFLA, AFMG…DAFF, TFHI…VLTV, VFLF…KGSL, FFFN…VTVV, WSYG…VFLA, IVIK…CLAQ, FTVP…ILAP, IGTG…VETK, LPIT…ADLF, LAMG…VTGL, and FYWL…FWAS.

The protein belongs to the major facilitator superfamily. Proton-dependent oligopeptide transporter (POT/PTR) (TC 2.A.17) family. In terms of tissue distribution, expressed in flowers.

The protein localises to the membrane. The protein is Protein NRT1/ PTR FAMILY 4.7 (NPF4.7) of Arabidopsis thaliana (Mouse-ear cress).